Consider the following 280-residue polypeptide: Beta-lactamase OXA-58 (280 aa).

Residues 1 to 18 form the signal peptide; that stretch reads MKLLKILSLVCLSISIGA. Cys-19 carries the N-palmitoyl cysteine lipid modification. The S-diacylglycerol cysteine moiety is linked to residue Cys-19. The active-site Acyl-ester intermediate is Ser-83. Residues Ser-83, Lys-86, Ser-130, Ser-221, Trp-223, and Arg-263 each coordinate a beta-lactam. N6-carboxylysine is present on Lys-86.

It belongs to the class-D beta-lactamase family. In terms of assembly, monomer. Dimer. Carboxylated on the epsilon-amino group of a lysine, with the resulting carbamate functional group serving as a general base. Probably N-carboxylated at Lys-86 at neutral pH in vivo and undergoes complete N-decarboxylation, at pH 4.1, in vitro. N-carboxylation at Lys-86 probably increases catalytic activity under physiological conditions.

Its subcellular location is the cell membrane. It carries out the reaction a beta-lactam + H2O = a substituted beta-amino acid. Activated approximately 3-fold by the presence of 0.1M NaHCO3. Class D beta-lactamase which confers resistance to the beta-lactam antibiotics, including penicillins and oxacillin, and moderate resistance to carbapenems such as imipenem; in the DH10B strain of E.coli. Acts via hydrolysis of the beta-lactam ring. Has benzylpenicillin-, oxacillin-, cephalothin- and imipenem-hydrolyzing activities. The sequence is that of Beta-lactamase OXA-58 from Acinetobacter baumannii.